We begin with the raw amino-acid sequence, 511 residues long: Signal transduction histidine-protein kinase/phosphatase MprB (511 aa).

The Cytoplasmic portion of the chain corresponds to 1-26; the sequence is MVGFRRGPRAPLRATSSLSLRWRVML. A helical membrane pass occupies residues 27–47; the sequence is LAMSMVAMVVVLMSFAVYAVI. Over 48–163 the chain is Extracellular; it reads SAALYSDIDN…PTEAVMTKLR (116 aa). The helical transmembrane segment at 164–184 threads the bilayer; it reads AVLLIVGGVGVAVAAVAGGMV. The Cytoplasmic portion of the chain corresponds to 185-511; sequence TRAGLRPVGR…SVDSQSARAR (327 aa). Residues 186 to 238 enclose the HAMP domain; sequence RAGLRPVGRLTEAAERVARTDDLRPIPVFGSDELARLTEAFNLMLRALAESRE. Residues 246–466 enclose the Histidine kinase domain; sequence DAGHELRTPL…AICMLLPGRP (221 aa). Position 249 is a phosphohistidine; by autocatalysis (His-249). Positions 468–511 are disordered; that stretch reads PDSAYPAAPDDKKTEPVDTRGANGANSRGSANVISVDSQSARAR. Residues 476–485 are compositionally biased toward basic and acidic residues; the sequence is PDDKKTEPVD. The span at 491–511 shows a compositional bias: polar residues; it reads GANSRGSANVISVDSQSARAR.

Requires Mg(2+) as cofactor. Mn(2+) is required as a cofactor. In terms of processing, autophosphorylated.

The protein resides in the cell membrane. It carries out the reaction ATP + protein L-histidine = ADP + protein N-phospho-L-histidine.. Its function is as follows. Member of the two-component regulatory system MprB/MprA which contributes to maintaining a balance among several systems involved in stress resistance and is required for establishment and maintenance of persistent infection in the host. In response to environmental signals MprB acts both as a membrane-associated protein kinase that undergoes autophosphorylation and subsequently transfers the phosphate to MprA, and a protein phosphatase that dephosphorylates phospho-MprA. This chain is Signal transduction histidine-protein kinase/phosphatase MprB (mprB), found in Mycobacterium ulcerans (strain Agy99).